The following is a 143-amino-acid chain: Antiholin-like protein LrgA (143 aa).

A run of 4 helical transmembrane segments spans residues 6 to 26 (VYSFLSQAFIFSAIMLISNII), 30 to 50 (LPIPMPSSVIGLVILFSLLCL), 61 to 81 (LGTALTGIIGFLFVPSGISVI), and 97 to 117 (VIVVATVILLAVTGLFAQFIL).

It belongs to the CidA/LrgA family. LrgA subfamily.

It localises to the cell membrane. Inhibits the expression or activity of extracellular murein hydrolases by interacting, possibly with LrgB, with the holin-like protein CidA. The LrgAB and CidA proteins may affect the proton motive force of the membrane. May be involved in programmed cell death (PCD), possibly triggering PCD in response to antibiotics and environmental stresses. This is Antiholin-like protein LrgA from Bacillus cereus (strain AH820).